The primary structure comprises 304 residues: Dihydroorotate dehydrogenase B (NAD(+)), catalytic subunit (304 aa).

Residues Ser21 and Lys45–Ala46 contribute to the FMN site. Residues Lys45 and Asn69 to Leu73 contribute to the substrate site. FMN-binding residues include Asn99 and Asn127. Substrate is bound at residue Asn127. Cys130 acts as the Nucleophile in catalysis. FMN is bound by residues Lys165 and Ile191. Substrate is bound at residue Asn192–Thr193. Residues Gly217, Gly243–Gly244, and Gly265–Thr266 each bind FMN.

Belongs to the dihydroorotate dehydrogenase family. Type 1 subfamily. Heterotetramer of 2 PyrK and 2 PyrD type B subunits. FMN is required as a cofactor.

It is found in the cytoplasm. The catalysed reaction is (S)-dihydroorotate + NAD(+) = orotate + NADH + H(+). It functions in the pathway pyrimidine metabolism; UMP biosynthesis via de novo pathway; orotate from (S)-dihydroorotate (NAD(+) route): step 1/1. Functionally, catalyzes the conversion of dihydroorotate to orotate with NAD(+) as electron acceptor. This is Dihydroorotate dehydrogenase B (NAD(+)), catalytic subunit (pyrD) from Shouchella clausii (strain KSM-K16) (Alkalihalobacillus clausii).